A 321-amino-acid polypeptide reads, in one-letter code: Fructose-1,6-bisphosphatase class 1 (321 aa).

The Mg(2+) site is built by glutamate 93, aspartate 114, leucine 116, and aspartate 117. Substrate contacts are provided by residues 117–120 (DGSS), asparagine 205, tyrosine 233, and lysine 263. Mg(2+) is bound at residue glutamate 269.

It belongs to the FBPase class 1 family. As to quaternary structure, homotetramer. Mg(2+) is required as a cofactor.

Its subcellular location is the cytoplasm. The catalysed reaction is beta-D-fructose 1,6-bisphosphate + H2O = beta-D-fructose 6-phosphate + phosphate. It functions in the pathway carbohydrate biosynthesis; gluconeogenesis. The protein is Fructose-1,6-bisphosphatase class 1 of Persephonella marina (strain DSM 14350 / EX-H1).